The sequence spans 348 residues: GTP 3',8-cyclase (348 aa).

The Radical SAM core domain maps to 24-248 (PFGRAVTYLR…TDIDYQTGGP (225 aa)). A GTP-binding site is contributed by R33. C40 and C44 together coordinate [4Fe-4S] cluster. Y46 is an S-adenosyl-L-methionine binding site. C47 contacts [4Fe-4S] cluster. Residue R82 participates in GTP binding. G86 contacts S-adenosyl-L-methionine. T115 is a binding site for GTP. S139 is an S-adenosyl-L-methionine binding site. K175 serves as a coordination point for GTP. An S-adenosyl-L-methionine-binding site is contributed by M209. C272 and C275 together coordinate [4Fe-4S] cluster. 277 to 279 (RVR) provides a ligand contact to GTP. Position 289 (C289) interacts with [4Fe-4S] cluster.

Belongs to the radical SAM superfamily. MoaA family. In terms of assembly, monomer and homodimer. The cofactor is [4Fe-4S] cluster.

The enzyme catalyses GTP + AH2 + S-adenosyl-L-methionine = (8S)-3',8-cyclo-7,8-dihydroguanosine 5'-triphosphate + 5'-deoxyadenosine + L-methionine + A + H(+). Its pathway is cofactor biosynthesis; molybdopterin biosynthesis. Its function is as follows. Catalyzes the cyclization of GTP to (8S)-3',8-cyclo-7,8-dihydroguanosine 5'-triphosphate. The chain is GTP 3',8-cyclase from Rhizobium etli (strain ATCC 51251 / DSM 11541 / JCM 21823 / NBRC 15573 / CFN 42).